The following is a 630-amino-acid chain: ATP-dependent zinc metalloprotease FtsH 2 (630 aa).

Over 1 to 8 (MNNNPNRR) the chain is Cytoplasmic. The chain crosses the membrane as a helical span at residues 9-29 (GSLIGPLFIYFILAMLIFMSI). The Periplasmic portion of the chain corresponds to 30-110 (SQLNTSNITE…YIQNTGASWW (81 aa)). Residues 111-131 (VTMLIYMLPLIILMFFWFWMF) traverse the membrane as a helical segment. Topologically, residues 132 to 630 (RRSGTGEGIP…KETNLFVSYA (499 aa)) are cytoplasmic. ATP is bound at residue 203–210 (GPPGTGKT). His425 provides a ligand contact to Zn(2+). Residue Glu426 is part of the active site. Zn(2+) contacts are provided by His429 and Asp502.

The protein in the central section; belongs to the AAA ATPase family. This sequence in the C-terminal section; belongs to the peptidase M41 family. As to quaternary structure, homohexamer. Requires Zn(2+) as cofactor.

The protein resides in the cell inner membrane. Acts as a processive, ATP-dependent zinc metallopeptidase for both cytoplasmic and membrane proteins. Plays a role in the quality control of integral membrane proteins. The chain is ATP-dependent zinc metalloprotease FtsH 2 from Petrotoga mobilis (strain DSM 10674 / SJ95).